The following is a 759-amino-acid chain: NADP-dependent malic enzyme (759 aa).

The segment at methionine 1 to asparagine 428 is malic enzyme. Tyrosine 39 acts as the Proton donor in catalysis. Lysine 94 serves as the catalytic Proton acceptor. A divalent metal cation-binding residues include glutamate 136, aspartate 137, and aspartate 162. NADP(+) contacts are provided by residues alanine 195 to alanine 198, asparagine 288, and asparagine 320. The segment at leucine 429–leucine 759 is phosphate acetyltransferase.

It in the N-terminal section; belongs to the malic enzymes family. The protein in the C-terminal section; belongs to the phosphate acetyltransferase and butyryltransferase family. The cofactor is Mg(2+). Mn(2+) serves as cofactor.

It carries out the reaction (S)-malate + NADP(+) = pyruvate + CO2 + NADPH. The enzyme catalyses oxaloacetate + H(+) = pyruvate + CO2. This is NADP-dependent malic enzyme (maeB) from Salmonella typhimurium (strain LT2 / SGSC1412 / ATCC 700720).